A 135-amino-acid polypeptide reads, in one-letter code: Small ribosomal subunit protein uS11 (135 aa).

The disordered stretch occupies residues 1 to 20 (MGRQRQQRSRGSRSRRRVRK).

This sequence belongs to the universal ribosomal protein uS11 family. Part of the 30S ribosomal subunit. Interacts with proteins S7 and S18. Binds to IF-3.

Its function is as follows. Located on the platform of the 30S subunit, it bridges several disparate RNA helices of the 16S rRNA. Forms part of the Shine-Dalgarno cleft in the 70S ribosome. This Rubrobacter xylanophilus (strain DSM 9941 / JCM 11954 / NBRC 16129 / PRD-1) protein is Small ribosomal subunit protein uS11.